Here is an 80-residue protein sequence, read N- to C-terminus: MKPEIHPIYREVVFHDVTSNFKFLTRSTMGTKETTLWEDGLEYPLVKVEISSASHPFYTGKHKLVDTSGRIDKFKKRYAR.

It belongs to the bacterial ribosomal protein bL31 family. Type B subfamily. In terms of assembly, part of the 50S ribosomal subunit.

This chain is Large ribosomal subunit protein bL31B, found in Xylella fastidiosa (strain M23).